A 149-amino-acid chain; its full sequence is FAD synthase (149 aa).

ATP is bound by residues 15–16 (VF), 20–23 (HVGH), and Asp101.

The protein belongs to the archaeal FAD synthase family. In terms of assembly, homodimer. It depends on a divalent metal cation as a cofactor.

It catalyses the reaction FMN + ATP + H(+) = FAD + diphosphate. Its pathway is cofactor biosynthesis; FAD biosynthesis; FAD from FMN: step 1/1. Its function is as follows. Catalyzes the transfer of the AMP portion of ATP to flavin mononucleotide (FMN) to produce flavin adenine dinucleotide (FAD) coenzyme. The chain is FAD synthase from Thermococcus kodakarensis (strain ATCC BAA-918 / JCM 12380 / KOD1) (Pyrococcus kodakaraensis (strain KOD1)).